The following is a 497-amino-acid chain: Cytochrome P450 3A18 (497 aa).

Position 442 (Cys442) interacts with heme.

It belongs to the cytochrome P450 family. Heme serves as cofactor.

The protein resides in the endoplasmic reticulum membrane. It localises to the microsome membrane. It catalyses the reaction an organic molecule + reduced [NADPH--hemoprotein reductase] + O2 = an alcohol + oxidized [NADPH--hemoprotein reductase] + H2O + H(+). Catalyzes 16-beta- and 6-alpha-hydroxylations of testosterone. The sequence is that of Cytochrome P450 3A18 (Cyp3a18) from Rattus norvegicus (Rat).